The chain runs to 577 residues: MTEQSEHSNGGVCASSIQPARNGGLCGHGGVGGVGEAEGDPVHTQIIQEDNPFVEHGQSYVAPHSGGGRTSSGSSSSASLQEGLLAPPLAKSSAGEQGRVRILEASKVSEGQGRSYITYTISYRDRVVRRRYSEFESLRKILIKLFPMTLIPPIPEKQSLTSYGKSIAGSNANYVLPSEAAGCDLAVSVINGSVNLNDQKMIRHRIRMLTSFLNRLLQNEEVTKTSIIGDFLDPNNANWNDVITTSATISSLPKSVLQCNPLDPTNTTPAHASLPIPPLSSAPQLMGKDGVGTSTKPSAEDMEFSRIEYEYKKYEQLLHTGVYKYNRRITRTMHELKQDLADLSEAFAEFAVEQSKGGDLAELLSYLSNANDEAAAVLDDLVGKIYYNINEPLSEAVHIAGAARELIQYRRLKFAQRDMLKKSLLGKEGHLKRLQEQEDDAKAIDQLVDQHLGEGTRINLQRPSEASPNTYKRKLFSRFNKLANIVKETVTYQEQDPKVNIKTVQEDIEQIKESLDVSASDLDVITATIRDVQLPAFSRNRDKELYDILKNYSKYMKEYAAKNLEIWKDLRKQEENA.

A disordered region spans residues 57 to 81; sequence GQSYVAPHSGGGRTSSGSSSSASLQ. The region spanning 95-239 is the PX domain; sequence GEQGRVRILE…DFLDPNNANW (145 aa). Residues Arg-131, Ser-133, Lys-157, and Arg-205 each contribute to the a 1,2-diacyl-sn-glycero-3-phospho-(1D-myo-inositol-3-phosphate) site.

It belongs to the sorting nexin family.

The protein resides in the endosome membrane. The protein localises to the preautophagosomal structure membrane. Functionally, required for cytoplasm to vacuole transport (Cvt), pexophagy and mitophagy. Also involved in endoplasmic reticulum-specific autophagic process and is essential for the survival of cells subjected to severe ER stress. Functions in protein retrieval from the endocytic pathway. The polypeptide is Autophagy-related protein 20 (ATG20) (Eremothecium gossypii (strain ATCC 10895 / CBS 109.51 / FGSC 9923 / NRRL Y-1056) (Yeast)).